The sequence spans 470 residues: Cyclic AMP-responsive element-binding protein 3-like protein 3 (470 aa).

At 1–319 (MDGDISTGKM…TSKPAHAGTC (319 aa)) the chain is on the cytoplasmic side. The segment at 59–145 (SDSDEFLNSI…PEPPRTQVHE (87 aa)) is disordered. In terms of domain architecture, bZIP spans 239–302 (VLKKIRRKIR…LSLLEQLKHL (64 aa)). Residues 241–270 (KKIRRKIRNKQSAQESRKKKKEYIDGLENR) form a basic motif region. Positions 281–302 (LQRKVLHLEKQNLSLLEQLKHL) are leucine-zipper. A Glycyl lysine isopeptide (Lys-Gly) (interchain with G-Cter in ubiquitin) cross-link involves residue Lys290. A helical; Signal-anchor for type II membrane protein transmembrane segment spans residues 320-340 (IAVLLLSFVLIILPSISPFTA). Residues 341 to 470 (NKVDSPGDFI…RVVQDALGVL (130 aa)) lie on the Lumenal side of the membrane. N-linked (GlcNAc...) asparagine glycans are attached at residues Asn410 and Asn417.

This sequence belongs to the bZIP family. ATF subfamily. Binds DNA as a dimer. May form homodimers. Interacts with ATF6. Interacts with SYNV1/HRD1; this interaction leads to CREB3L3 ubiquitination and proteasomal degradation. In terms of processing, controlled by regulated intramembrane proteolysis (RIP). Following ER stress a fragment containing the cytoplasmic transcription factor domain is released by proteolysis. The cleavage seems to be performed sequentially by site-1 and site-2 proteases (PS1 and PS2). N-glycosylation is required for optimal proteolytic activation. Post-translationally, ubiquitinated at Lys-290 by SYNV1/HRD1 via 'Lys-27'-linked ubiquitin.

The protein localises to the endoplasmic reticulum membrane. It is found in the nucleus. Its function is as follows. Transcription factor that may act during endoplasmic reticulum stress by activating unfolded protein response target genes. Activated in response to cAMP stimulation. Binds the cAMP response element (CRE). Activates transcription through box-B element and CRE. Seems to function synergistically with ATF6. In acute inflammatory response, may activate expression of acute phase response (APR) genes. May be involved in growth suppression. Regulates FGF21 transcription. Plays a crucial role in the regulation of triglyceride metabolism and is required for the maintenance of normal plasma triglyceride concentrations. The polypeptide is Cyclic AMP-responsive element-binding protein 3-like protein 3 (Creb3l3) (Rattus norvegicus (Rat)).